The chain runs to 4555 residues: Protocadherin Fat 3 (4555 aa).

A signal peptide spans 1 to 31 (MGVTMRHCIDTRPPSCLIFLLLKLCATVSQG). Residues 32-4153 (LPGTGPLGFH…AGHSYVGKEE (4122 aa)) lie on the Extracellular side of the membrane. Cadherin domains are found at residues 43–157 (THAL…RPLF), 158–265 (SPTT…APII), 263–374 (PIIH…TPIK), 376–471 (EKDV…TPEF), 472–577 (QETL…SPLF), 578–680 (EKVA…SKSF), 726–830 (KSFP…SPVF), 831–935 (LQDS…SPAF), 936–1042 (IPSS…TPYF), 1043–1147 (PDFA…APLT), 1148–1253 (SEPI…KPQF), 1254–1358 (PEKV…SPIP), 1362–1459 (DEPF…GPEF), 1460–1565 (SQPH…SPYF), 1566–1768 (TNPL…PPVF), 1769–1882 (LFSQ…PPVF), 1883–1985 (TQAV…TQSF), 1982–2083 (TQSF…SPVF), 2084–2185 (VGLP…MPVF), 2186–2286 (DKPF…PPVF), 2287–2393 (DQPT…PPVF), 2394–2495 (NQLI…SPAF), 2496–2599 (SQST…APQF), 2600–2707 (MTLE…LPSF), 2708–2813 (TQSQ…KPVF), 2814–2923 (ETSS…APVF), 2924–3028 (AHEV…SPVC), 3029–3130 (DQVA…PPVF), 3131–3235 (SSNH…PPVF), 3236–3340 (ERRD…PPRF), 3341–3445 (SQDV…SPVF), 3446–3550 (TPAN…KPTA), and 3551–3652 (IPLE…TIRF). N-linked (GlcNAc...) asparagine glycosylation is present at N48. N-linked (GlcNAc...) asparagine glycosylation occurs at N341. 7 N-linked (GlcNAc...) asparagine glycosylation sites follow: N481, N562, N667, N799, N879, N898, and N1006. Residues N1367 and N1429 are each glycosylated (N-linked (GlcNAc...) asparagine). N1751 carries N-linked (GlcNAc...) asparagine glycosylation. N1944, N1993, and N1996 each carry an N-linked (GlcNAc...) asparagine glycan. Residues N2208, N2292, N2331, and N2467 are each glycosylated (N-linked (GlcNAc...) asparagine). An N-linked (GlcNAc...) asparagine glycan is attached at N2734. A glycan (N-linked (GlcNAc...) asparagine) is linked at N3000. N3201 carries N-linked (GlcNAc...) asparagine glycosylation. N-linked (GlcNAc...) asparagine glycosylation is found at N3449, N3618, and N3741. An EGF-like 1 domain is found at 3794–3832 (SNDPCVEKPCPEDMQCVGYEASRRPFLCQCPPGKLGECS). Intrachain disulfides connect C3798/C3809, C3803/C3821, and C3823/C3831. Residues 3834-4017 (HTSLSFAGNS…VGLTELKLGC (184 aa)) form the Laminin G-like domain. N3926 carries N-linked (GlcNAc...) asparagine glycosylation. Intrachain disulfides connect C3984/C4017, C4024/C4035, C4029/C4045, C4047/C4056, C4063/C4074, C4068/C4083, C4085/C4094, C4101/C4112, C4106/C4121, and C4123/C4132. 2 consecutive EGF-like domains span residues 4020 to 4057 (YPDA…TNCE) and 4059 to 4095 (EITA…VTCE). Residues 4097–4133 (DVDECEREECENGGSCVNLFGSFFCNCTPGYVGQYCG) enclose the EGF-like 4; calcium-binding domain. Residues 4154–4174 (LIGIAVVLFVIFTLIVLFIVF) form a helical membrane-spanning segment. Residues 4175 to 4555 (RKKVFRKNYS…FVETQHQTQV (381 aa)) are Cytoplasmic-facing. Residues 4326–4343 (SNKGSNSEVQSLNSFQSD) show a composition bias toward polar residues. Disordered regions lie at residues 4326–4347 (SNKG…SGDD), 4395–4424 (GGYD…LPED), and 4452–4472 (PRFH…TDLG). R4508 and R4518 each carry omega-N-methylarginine.

Restricted to the nervous system. Abundantly expressed in the fetal brain.

It is found in the membrane. In terms of biological role, may play a role in the interactions between neurites derived from specific subsets of neurons during development. The polypeptide is Protocadherin Fat 3 (Fat3) (Rattus norvegicus (Rat)).